Consider the following 137-residue polypeptide: 14 kDa proline-rich protein DC2.15 (137 aa).

The signal sequence occupies residues 1 to 25 (MGSKNSASVALFFTLNILFFALVSS). The tract at residues 30–53 (PDPYKPKPKPTPKPTPTPYPSAGK) is disordered. A compositionally biased stretch (pro residues) spans 38 to 48 (KPTPKPTPTPY). A helical membrane pass occupies residues 88-104 (LEGLVNLEAAVCLCTAI).

It localises to the membrane. In terms of biological role, may be connected with the initiation of embryogenesis or with the metabolic changes produced by the removal of auxins. The protein is 14 kDa proline-rich protein DC2.15 of Daucus carota (Wild carrot).